The following is a 210-amino-acid chain: Protein GrpE (210 aa).

The interval M1 to L71 is disordered. Residues T11–Q23 are compositionally biased toward acidic residues. A compositionally biased stretch (polar residues) spans N24–T35. Low complexity predominate over residues D36–E46. The span at N47–S60 shows a compositional bias: acidic residues. Positions Q61–L71 are enriched in basic and acidic residues.

Belongs to the GrpE family. In terms of assembly, homodimer.

It is found in the cytoplasm. In terms of biological role, participates actively in the response to hyperosmotic and heat shock by preventing the aggregation of stress-denatured proteins, in association with DnaK and GrpE. It is the nucleotide exchange factor for DnaK and may function as a thermosensor. Unfolded proteins bind initially to DnaJ; upon interaction with the DnaJ-bound protein, DnaK hydrolyzes its bound ATP, resulting in the formation of a stable complex. GrpE releases ADP from DnaK; ATP binding to DnaK triggers the release of the substrate protein, thus completing the reaction cycle. Several rounds of ATP-dependent interactions between DnaJ, DnaK and GrpE are required for fully efficient folding. The chain is Protein GrpE from Staphylococcus epidermidis (strain ATCC 35984 / DSM 28319 / BCRC 17069 / CCUG 31568 / BM 3577 / RP62A).